Consider the following 238-residue polypeptide: Ribosomal RNA small subunit methyltransferase G (238 aa).

S-adenosyl-L-methionine-binding positions include glycine 77, phenylalanine 82, 128 to 129 (AE), and arginine 146. Residues 216-238 (KKRQTPKKYPRKPGTPNKEPLLK) are disordered.

This sequence belongs to the methyltransferase superfamily. RNA methyltransferase RsmG family.

The protein localises to the cytoplasm. Functionally, specifically methylates the N7 position of guanine in position 535 of 16S rRNA. This is Ribosomal RNA small subunit methyltransferase G from Macrococcus caseolyticus (strain JCSC5402) (Macrococcoides caseolyticum).